The following is a 198-amino-acid chain: FMN-dependent NADH:quinone oxidoreductase (198 aa).

S10 provides a ligand contact to FMN.

It belongs to the azoreductase type 1 family. Homodimer. The cofactor is FMN.

It catalyses the reaction 2 a quinone + NADH + H(+) = 2 a 1,4-benzosemiquinone + NAD(+). The catalysed reaction is N,N-dimethyl-1,4-phenylenediamine + anthranilate + 2 NAD(+) = 2-(4-dimethylaminophenyl)diazenylbenzoate + 2 NADH + 2 H(+). Its function is as follows. Quinone reductase that provides resistance to thiol-specific stress caused by electrophilic quinones. In terms of biological role, also exhibits azoreductase activity. Catalyzes the reductive cleavage of the azo bond in aromatic azo compounds to the corresponding amines. The sequence is that of FMN-dependent NADH:quinone oxidoreductase from Paraburkholderia phymatum (strain DSM 17167 / CIP 108236 / LMG 21445 / STM815) (Burkholderia phymatum).